The following is a 183-amino-acid chain: ATP synthase subunit b, chloroplastic (183 aa).

Residues 20–42 (INTNVFETNIINLAIVVGTLFYY) form a helical membrane-spanning segment.

Belongs to the ATPase B chain family. As to quaternary structure, F-type ATPases have 2 components, F(1) - the catalytic core - and F(0) - the membrane proton channel. F(1) has five subunits: alpha(3), beta(3), gamma(1), delta(1), epsilon(1). F(0) has four main subunits: a(1), b(1), b'(1) and c(10-14). The alpha and beta chains form an alternating ring which encloses part of the gamma chain. F(1) is attached to F(0) by a central stalk formed by the gamma and epsilon chains, while a peripheral stalk is formed by the delta, b and b' chains.

The protein resides in the plastid. It localises to the chloroplast thylakoid membrane. Its function is as follows. F(1)F(0) ATP synthase produces ATP from ADP in the presence of a proton or sodium gradient. F-type ATPases consist of two structural domains, F(1) containing the extramembraneous catalytic core and F(0) containing the membrane proton channel, linked together by a central stalk and a peripheral stalk. During catalysis, ATP synthesis in the catalytic domain of F(1) is coupled via a rotary mechanism of the central stalk subunits to proton translocation. Functionally, component of the F(0) channel, it forms part of the peripheral stalk, linking F(1) to F(0). This is ATP synthase subunit b, chloroplastic from Euglena gracilis.